Here is a 71-residue protein sequence, read N- to C-terminus: Prokaryotic ubiquitin-like protein Pup (71 aa).

Low complexity predominate over residues M1–G18. Residues M1–D42 are disordered. The tract at residues E27–Y65 is ARC ATPase binding. Residues S29–E60 are a coiled coil. An Isoglutamyl lysine isopeptide (Glu-Lys) (interchain with K-? in acceptor proteins) cross-link involves residue E71.

The protein belongs to the prokaryotic ubiquitin-like protein family. In terms of assembly, strongly interacts with the proteasome-associated ATPase ARC through a hydrophobic interface; the interacting region of Pup lies in its C-terminal half. There is one Pup binding site per ARC hexamer ring.

It participates in protein degradation; proteasomal Pup-dependent pathway. Protein modifier that is covalently attached to lysine residues of substrate proteins, thereby targeting them for proteasomal degradation. The tagging system is termed pupylation. This Salinispora tropica (strain ATCC BAA-916 / DSM 44818 / JCM 13857 / NBRC 105044 / CNB-440) protein is Prokaryotic ubiquitin-like protein Pup.